The following is a 342-amino-acid chain: Voltage-gated hydrogen channel 1 (342 aa).

Disordered stretches follow at residues 1–20 (MEGDNCNKSRHKSHNMINPN) and 74–102 (FNDNNNHERPAPQEQSTQNTMISMQSEQK). The Cytoplasmic portion of the chain corresponds to 1 to 148 (MEGDNCNKSR…KLRHILHSKP (148 aa)). The span at 86–102 (QEQSTQNTMISMQSEQK) shows a compositional bias: polar residues. A helical membrane pass occupies residues 149–169 (IHVAIIVLVVLDSFLVVGELL). The Extracellular segment spans residues 170 to 185 (IDLKVIIVPHGNPAPE). The helical transmembrane segment at 186–208 (ILHGFSLSILSIFMVEIALKIIA) threads the bilayer. Residues 209–217 (DHRHFIHHK) are Cytoplasmic-facing. The chain crosses the membrane as a helical span at residues 218–238 (VEVLDAVVVVISFGVDIALIF). Residues 239–247 (VGESEALAA) are Extracellular-facing. Residues 248–268 (IGLLVILRLWRVFRIINGIIV) traverse the membrane as a helical segment. The Cytoplasmic segment spans residues 269-342 (TVKTKADDRV…HSTTTASADV (74 aa)). Positions 271 to 315 (KTKADDRVHEIKKKNSELELQIHNLEEKLSQKEQDMSRLHEILRC) form a coiled coil.

This sequence belongs to the hydrogen channel family. Homodimer.

The protein resides in the membrane. It is found in the cell membrane. Less sensitive to zinc ions as compared to the mammalian homologs. In terms of biological role, mediates the voltage-dependent proton permeability of excitable membranes. Forms a proton-selective channel through which protons may pass in accordance with their electrochemical gradient. This is Voltage-gated hydrogen channel 1 (HVCN1) from Ciona intestinalis (Transparent sea squirt).